Consider the following 817-residue polypeptide: tRNA(Met) cytidine acetyltransferase TmcA (817 aa).

Residues Q265, 289 to 298 (GRGKSVSVGI), and R439 contribute to the ATP site. The N-acetyltransferase domain maps to 469 to 664 (ELIRKMEVYL…YTAIVIKPIS (196 aa)). Residues 589–591 (IAT), 596–602 (MDLGLGS), E629, and R636 contribute to the acetyl-CoA site.

It belongs to the RNA cytidine acetyltransferase family. TmcA subfamily.

It localises to the cytoplasm. The catalysed reaction is cytidine(34) in elongator tRNA(Met) + acetyl-CoA + ATP + H2O = N(4)-acetylcytidine(34) in elongator tRNA(Met) + ADP + phosphate + CoA + H(+). It catalyses the reaction a cytidine in RNA + acetyl-CoA + ATP + H2O = an N(4)-acetylcytidine in RNA + ADP + phosphate + CoA + H(+). The enzyme catalyses a cytidine in tRNA + acetyl-CoA + ATP + H2O = an N(4)-acetylcytidine in tRNA + ADP + phosphate + CoA + H(+). It carries out the reaction a cytidine in mRNA + acetyl-CoA + ATP + H2O = an N(4)-acetylcytidine in mRNA + ADP + phosphate + CoA + H(+). In terms of biological role, catalyzes the formation of N(4)-acetylcytidine (ac(4)C) at the wobble position of tRNA(Met), by using acetyl-CoA as an acetyl donor and ATP (or GTP). Its function is as follows. Catalyzes the formation of N(4)-acetylcytidine (ac(4)C) sites in rRNA, tRNA, mRNA and non-coding (nc) RNA, almost always on the middle C of a CCG motif. In hyperthermophiles more acetylation is seen at higher temperatures. This Pyrococcus abyssi (strain GE5 / Orsay) protein is tRNA(Met) cytidine acetyltransferase TmcA.